A 254-amino-acid chain; its full sequence is Peptide methionine sulfoxide reductase A5 (254 aa).

Positions 1–33 (MAISLKRNRFFIPYTNLVFFFFLCVSLLDKTVS) are cleaved as a signal peptide.

It belongs to the MsrA Met sulfoxide reductase family.

It catalyses the reaction L-methionyl-[protein] + [thioredoxin]-disulfide + H2O = L-methionyl-(S)-S-oxide-[protein] + [thioredoxin]-dithiol. The catalysed reaction is [thioredoxin]-disulfide + L-methionine + H2O = L-methionine (S)-S-oxide + [thioredoxin]-dithiol. In terms of biological role, catalyzes the reduction of methionine sulfoxide (MetSO) to methionine in proteins. Plays a protective role against oxidative stress by restoring activity to proteins that have been inactivated by methionine oxidation. MSRA family specifically reduces the MetSO S-enantiomer. The sequence is that of Peptide methionine sulfoxide reductase A5 (MSRA5) from Arabidopsis thaliana (Mouse-ear cress).